We begin with the raw amino-acid sequence, 741 residues long: Cysteine--tRNA ligase, cytoplasmic (741 aa).

C46 is a binding site for Zn(2+). The 'HIGH' region motif lies at 48-58; it reads PTVYDASHMGH. S297 carries the phosphoserine modification. Residues C340, H365, and E369 each contribute to the Zn(2+) site. The 'KMSKS' region signature appears at 398–402; the sequence is KMSKS. K401 provides a ligand contact to ATP.

Belongs to the class-I aminoacyl-tRNA synthetase family. It depends on Zn(2+) as a cofactor.

The protein localises to the cytoplasm. It carries out the reaction tRNA(Cys) + L-cysteine + ATP = L-cysteinyl-tRNA(Cys) + AMP + diphosphate. This Drosophila pseudoobscura pseudoobscura (Fruit fly) protein is Cysteine--tRNA ligase, cytoplasmic (Aats-cys).